The chain runs to 110 residues: Large ribosomal subunit protein uL22 (110 aa).

The protein belongs to the universal ribosomal protein uL22 family. In terms of assembly, part of the 50S ribosomal subunit.

Its function is as follows. This protein binds specifically to 23S rRNA; its binding is stimulated by other ribosomal proteins, e.g. L4, L17, and L20. It is important during the early stages of 50S assembly. It makes multiple contacts with different domains of the 23S rRNA in the assembled 50S subunit and ribosome. The globular domain of the protein is located near the polypeptide exit tunnel on the outside of the subunit, while an extended beta-hairpin is found that lines the wall of the exit tunnel in the center of the 70S ribosome. This Syntrophobacter fumaroxidans (strain DSM 10017 / MPOB) protein is Large ribosomal subunit protein uL22.